The sequence spans 336 residues: Sulfate/thiosulfate import ATP-binding protein CysA (336 aa).

Positions 3–233 constitute an ABC transporter domain; sequence ITIENVSKSF…PASPFVMSFI (231 aa). An ATP-binding site is contributed by 35–42; the sequence is GPSGSGKS.

This sequence belongs to the ABC transporter superfamily. Sulfate/tungstate importer (TC 3.A.1.6) family. In terms of assembly, the complex is composed of two ATP-binding proteins (CysA), two transmembrane proteins (CysT and CysW) and a solute-binding protein (CysP).

The protein resides in the cell inner membrane. The enzyme catalyses sulfate(out) + ATP + H2O = sulfate(in) + ADP + phosphate + H(+). It carries out the reaction thiosulfate(out) + ATP + H2O = thiosulfate(in) + ADP + phosphate + H(+). Its function is as follows. Part of the ABC transporter complex CysAWTP involved in sulfate/thiosulfate import. Responsible for energy coupling to the transport system. This is Sulfate/thiosulfate import ATP-binding protein CysA from Thermosynechococcus vestitus (strain NIES-2133 / IAM M-273 / BP-1).